The primary structure comprises 360 residues: Phospho-N-acetylmuramoyl-pentapeptide-transferase (360 aa).

Over 1–25 the chain is Periplasmic; that stretch reads MLVWLAEHLVKYYSGFNVFSYLTFR. Residues 26 to 46 form a helical membrane-spanning segment; sequence AIVSLLTALFISLWMGPRMIA. Residues 47–71 lie on the Cytoplasmic side of the membrane; sequence RLQKLSFGQVVRNDGPESHFSKRGT. The chain crosses the membrane as a helical span at residues 72–92; it reads PTMGGIMILTAIVISVLLWAY. Position 93 (Pro93) is a topological domain, periplasmic. Residues 94-114 form a helical membrane-spanning segment; sequence SNPYVWCVLVVLIGYGIIGFV. Residues 115-131 lie on the Cytoplasmic side of the membrane; sequence DDYHKVVRKDTKGLIAR. A helical transmembrane segment spans residues 132-152; sequence WKYFWMSVIALGVAFALYLVG. The Periplasmic portion of the chain corresponds to 153–167; the sequence is KDTPATQLVVPFFKD. The helical transmembrane segment at 168 to 188 threads the bilayer; it reads VMPQLGLFYILLSYFVIVGTG. The Cytoplasmic segment spans residues 189-198; that stretch reads NAVNLTDGLD. A helical membrane pass occupies residues 199-219; the sequence is GLAIMPTVFVAAGFALVAWAT. At 220–235 the chain is on the periplasmic side; that stretch reads GNMNFANYLHIPYLRY. A helical transmembrane segment spans residues 236–256; the sequence is AGELVIVCTAIVGAGLGFLWF. Over 257-262 the chain is Cytoplasmic; it reads NTYPAQ. The chain crosses the membrane as a helical span at residues 263 to 283; it reads VFMGDVGSLALGGALGIIAVL. Over 284–287 the chain is Periplasmic; sequence LRQE. A helical transmembrane segment spans residues 288–308; sequence FLLVIMGGVFVVETLSVILQV. Residues 309-337 are Cytoplasmic-facing; the sequence is GSFKLRGQRIFRMAPIHHHYELKGWPEPR. The helical transmembrane segment at 338–358 threads the bilayer; it reads VIVRFWIISLMLVLIGLATLK. Over 359–360 the chain is Periplasmic; sequence VR.

The protein belongs to the glycosyltransferase 4 family. MraY subfamily. It depends on Mg(2+) as a cofactor.

It localises to the cell inner membrane. It carries out the reaction UDP-N-acetyl-alpha-D-muramoyl-L-alanyl-gamma-D-glutamyl-meso-2,6-diaminopimeloyl-D-alanyl-D-alanine + di-trans,octa-cis-undecaprenyl phosphate = di-trans,octa-cis-undecaprenyl diphospho-N-acetyl-alpha-D-muramoyl-L-alanyl-D-glutamyl-meso-2,6-diaminopimeloyl-D-alanyl-D-alanine + UMP. The protein operates within cell wall biogenesis; peptidoglycan biosynthesis. Catalyzes the initial step of the lipid cycle reactions in the biosynthesis of the cell wall peptidoglycan: transfers peptidoglycan precursor phospho-MurNAc-pentapeptide from UDP-MurNAc-pentapeptide onto the lipid carrier undecaprenyl phosphate, yielding undecaprenyl-pyrophosphoryl-MurNAc-pentapeptide, known as lipid I. The polypeptide is Phospho-N-acetylmuramoyl-pentapeptide-transferase (Salmonella paratyphi A (strain ATCC 9150 / SARB42)).